The primary structure comprises 574 residues: ATP synthase subunit beta, mitochondrial (574 aa).

The transit peptide at Met-1–Ala-26 directs the protein to the mitochondrion. Gly-183 to Thr-190 is a binding site for ATP.

This sequence belongs to the ATPase alpha/beta chains family. In terms of assembly, F-type ATPases have 2 components, CF(1) - the catalytic core - and CF(0) - the membrane proton channel. CF(1) has five subunits: alpha(3), beta(3), gamma(1), delta(1), epsilon(1). CF(0) has three main subunits: a, b and c.

It is found in the mitochondrion. The protein resides in the mitochondrion inner membrane. It carries out the reaction ATP + H2O + 4 H(+)(in) = ADP + phosphate + 5 H(+)(out). Functionally, mitochondrial membrane ATP synthase (F(1)F(0) ATP synthase or Complex V) produces ATP from ADP in the presence of a proton gradient across the membrane which is generated by electron transport complexes of the respiratory chain. F-type ATPases consist of two structural domains, F(1) - containing the extramembraneous catalytic core, and F(0) - containing the membrane proton channel, linked together by a central stalk and a peripheral stalk. During catalysis, ATP synthesis in the catalytic domain of F(1) is coupled via a rotary mechanism of the central stalk subunits to proton translocation. Subunits alpha and beta form the catalytic core in F(1). Rotation of the central stalk against the surrounding alpha(3)beta(3) subunits leads to hydrolysis of ATP in three separate catalytic sites on the beta subunits. The polypeptide is ATP synthase subunit beta, mitochondrial (ATP2) (Chlamydomonas reinhardtii (Chlamydomonas smithii)).